The following is a 129-amino-acid chain: MYDNLKSLGITQPEDVDRYSLRQEANNDILKIYFRKDKGEFFAKSVKFKYPRQRKTVVSDNASHGYKEINEINPNLRYVIDELDQLCKRDQIEVDLKRKILDDLRHLESVVTNKIAEIEADLEKLTNGR.

It belongs to the UPF0325 family.

This Yersinia pseudotuberculosis serotype IB (strain PB1/+) protein is UPF0325 protein YPTS_3127.